Consider the following 339-residue polypeptide: tRNA-specific 2-thiouridylase MnmA (339 aa).

ATP is bound by residues 6–13 and Met-32; that span reads AMSGGVDS. Cys-92 acts as the Nucleophile in catalysis. Cys-92 and Cys-186 are oxidised to a cystine. Residue Gly-116 participates in ATP binding. An interaction with tRNA region spans residues 134–136; sequence KDQ. The Cysteine persulfide intermediate role is filled by Cys-186. The interaction with tRNA stretch occupies residues 288–289; that stretch reads RY.

The protein belongs to the MnmA/TRMU family.

The protein resides in the cytoplasm. The catalysed reaction is S-sulfanyl-L-cysteinyl-[protein] + uridine(34) in tRNA + AH2 + ATP = 2-thiouridine(34) in tRNA + L-cysteinyl-[protein] + A + AMP + diphosphate + H(+). In terms of biological role, catalyzes the 2-thiolation of uridine at the wobble position (U34) of tRNA, leading to the formation of s(2)U34. The chain is tRNA-specific 2-thiouridylase MnmA from Campylobacter curvus (strain 525.92).